The primary structure comprises 680 residues: DNA ligase (680 aa).

Residues 44–48, 93–94, and E125 contribute to the NAD(+) site; these read DHVYD and SM. K127 (N6-AMP-lysine intermediate) is an active-site residue. The NAD(+) site is built by R148, E182, K298, and K322. 4 residues coordinate Zn(2+): C416, C419, C434, and C439. The BRCT domain occupies 600–680; sequence NPDSEWNGRR…QFSQAMKEEQ (81 aa).

The protein belongs to the NAD-dependent DNA ligase family. LigA subfamily. Requires Mg(2+) as cofactor. The cofactor is Mn(2+).

It carries out the reaction NAD(+) + (deoxyribonucleotide)n-3'-hydroxyl + 5'-phospho-(deoxyribonucleotide)m = (deoxyribonucleotide)n+m + AMP + beta-nicotinamide D-nucleotide.. Functionally, DNA ligase that catalyzes the formation of phosphodiester linkages between 5'-phosphoryl and 3'-hydroxyl groups in double-stranded DNA using NAD as a coenzyme and as the energy source for the reaction. It is essential for DNA replication and repair of damaged DNA. This chain is DNA ligase, found in Limosilactobacillus reuteri (strain DSM 20016) (Lactobacillus reuteri).